The following is a 233-amino-acid chain: uncharacterized protein (233 aa).

The protein belongs to the LutC/YkgG family.

This is an uncharacterized protein from Neisseria meningitidis serogroup B (strain ATCC BAA-335 / MC58).